The following is a 312-amino-acid chain: Glyoxylate/hydroxypyruvate reductase A (312 aa).

Arg227 is an active-site residue. Residue His275 is the Proton donor of the active site.

It belongs to the D-isomer specific 2-hydroxyacid dehydrogenase family. GhrA subfamily.

It localises to the cytoplasm. The catalysed reaction is glycolate + NADP(+) = glyoxylate + NADPH + H(+). The enzyme catalyses (R)-glycerate + NAD(+) = 3-hydroxypyruvate + NADH + H(+). It catalyses the reaction (R)-glycerate + NADP(+) = 3-hydroxypyruvate + NADPH + H(+). Its function is as follows. Catalyzes the NADPH-dependent reduction of glyoxylate and hydroxypyruvate into glycolate and glycerate, respectively. The sequence is that of Glyoxylate/hydroxypyruvate reductase A from Escherichia coli (strain UTI89 / UPEC).